The chain runs to 302 residues: RNA polymerase II holoenzyme cyclin-like subunit (302 aa).

The region spanning 53–142 is the Cyclin N-terminal domain; sequence QQLIKLGKRM…VGECEFSLIS (90 aa).

Belongs to the cyclin family. Cyclin C subfamily. As to quaternary structure, component of the srb8-11 complex, a regulatory module of the Mediator complex.

Its subcellular location is the nucleus. In terms of biological role, component of the srb8-11 complex. The srb8-11 complex is a regulatory module of the Mediator complex which is itself involved in regulation of basal and activated RNA polymerase II-dependent transcription. The srb8-11 complex may be involved in the transcriptional repression of a subset of genes regulated by Mediator. It may inhibit the association of the Mediator complex with RNA polymerase II to form the holoenzyme complex. The srb8-11 complex phosphorylates the C-terminal domain (CTD) of the largest subunit of RNA polymerase II. This chain is RNA polymerase II holoenzyme cyclin-like subunit (ssn8), found in Emericella nidulans (strain FGSC A4 / ATCC 38163 / CBS 112.46 / NRRL 194 / M139) (Aspergillus nidulans).